The sequence spans 171 residues: Protein-export protein SecB (171 aa).

This sequence belongs to the SecB family. Homotetramer, a dimer of dimers. One homotetramer interacts with 1 SecA dimer.

Its subcellular location is the cytoplasm. In terms of biological role, one of the proteins required for the normal export of preproteins out of the cell cytoplasm. It is a molecular chaperone that binds to a subset of precursor proteins, maintaining them in a translocation-competent state. It also specifically binds to its receptor SecA. The protein is Protein-export protein SecB of Gluconacetobacter diazotrophicus (strain ATCC 49037 / DSM 5601 / CCUG 37298 / CIP 103539 / LMG 7603 / PAl5).